Reading from the N-terminus, the 393-residue chain is Phosphoglycerate kinase (393 aa).

Residues 21–23 (DFN), Arg37, 60–63 (HLGR), Arg119, and Arg152 each bind substrate. ATP is bound by residues Lys202, Glu323, and 349 to 352 (GGDT).

The protein belongs to the phosphoglycerate kinase family. Monomer.

The protein localises to the cytoplasm. It carries out the reaction (2R)-3-phosphoglycerate + ATP = (2R)-3-phospho-glyceroyl phosphate + ADP. It participates in carbohydrate degradation; glycolysis; pyruvate from D-glyceraldehyde 3-phosphate: step 2/5. The chain is Phosphoglycerate kinase from Desulforudis audaxviator (strain MP104C).